The chain runs to 264 residues: 4-hydroxy-tetrahydrodipicolinate reductase (264 aa).

9-14 (GCSGRM) contacts NAD(+). An NADP(+)-binding site is contributed by Arg36. NAD(+)-binding positions include 100 to 102 (GTT) and 121 to 124 (SANM). The active-site Proton donor/acceptor is the His154. His155 serves as a coordination point for (S)-2,3,4,5-tetrahydrodipicolinate. Lys158 functions as the Proton donor in the catalytic mechanism. A (S)-2,3,4,5-tetrahydrodipicolinate-binding site is contributed by 164–165 (GT).

This sequence belongs to the DapB family.

The protein resides in the cytoplasm. It catalyses the reaction (S)-2,3,4,5-tetrahydrodipicolinate + NAD(+) + H2O = (2S,4S)-4-hydroxy-2,3,4,5-tetrahydrodipicolinate + NADH + H(+). It carries out the reaction (S)-2,3,4,5-tetrahydrodipicolinate + NADP(+) + H2O = (2S,4S)-4-hydroxy-2,3,4,5-tetrahydrodipicolinate + NADPH + H(+). It functions in the pathway amino-acid biosynthesis; L-lysine biosynthesis via DAP pathway; (S)-tetrahydrodipicolinate from L-aspartate: step 4/4. In terms of biological role, catalyzes the conversion of 4-hydroxy-tetrahydrodipicolinate (HTPA) to tetrahydrodipicolinate. This is 4-hydroxy-tetrahydrodipicolinate reductase from Wolbachia sp. subsp. Brugia malayi (strain TRS).